The primary structure comprises 619 residues: Bifunctional glutathionylspermidine synthetase/amidase (619 aa).

The gsp amidase stretch occupies residues 2–195; that stretch reads SKGTTSQDAP…LGWMIQTEDT (194 aa). The 143-residue stretch at 34-176 folds into the Peptidase C51 domain; it reads DPQEYEDDAV…MVVENGCYTL (143 aa). A glutathionylspermidine-binding site is contributed by glutamine 58. Cysteine 59 (S-(gamma-glutamyl-cysteinyl-glycyl)-cysteine intermediate) is an active-site residue. Position 59 is a cysteine sulfenic acid (-SOH); transient (cysteine 59). Glutathionylspermidine is bound by residues arginine 64, 78–81, and asparagine 149; that span reads VGMA. The interval 196-205 is linker; it reads EYSLPQPEIA. The tract at residues 206-619 is gsp synthetase; the sequence is GELLKISGAR…DIEPLIVVKK (414 aa). Residue arginine 316 participates in glutathione binding. Position 316 to 318 (316 to 318) interacts with ATP; sequence RMD. The Mg(2+) site is built by aspartate 318, glutamate 330, and asparagine 332. Residue serine 335 participates in glutathione binding. Glutamate 391 is a binding site for spermidine. 2 residues coordinate glutathione: glutamate 392 and threonine 446. Residues lysine 498, lysine 533, 539-540, 568-571, glutamine 582, and 603-605 contribute to the ATP site; these read CG, QQLW, and LVI. A spermidine-binding site is contributed by aspartate 610.

This sequence in the C-terminal section; belongs to the glutathionylspermidine synthase preATP-grasp family. In terms of assembly, homodimer. Post-translationally, oxidation of Cys-59 to sulfenic acid during oxidative stress selectively inhibits the amidase activity which leads to a rapid increase in the amounts of intracellular Gsp and Gsp S-thiolated proteins (GspSSPs).

It catalyses the reaction spermidine + glutathione + ATP = glutathionylspermidine + ADP + phosphate + H(+). It carries out the reaction glutathionylspermidine + H2O = spermidine + glutathione. It functions in the pathway sulfur metabolism; glutathione metabolism. Its pathway is amine and polyamine metabolism; spermidine metabolism. Its activity is regulated as follows. When exposed to oxidative stress, Gsp amidase activity is transiently inhibited in vivo by oxidation of the catalytic Cys-59 thiol to sulfenic acid; this modification does not affect Gsp synthetase activity. Gsp amidase activity is negatively autoregulated by the Gsp synthetase domain, and is activated by the Gsp synthetase substrates, GSH and ATP-Mg(2+); the occupancy of the synthetase active site may initiate communication through the protein as manifest by the release of inhibition of the amidase activity. A tetrahedral phosphonate analog of glutathionylspermidine, designed as a mimic of the proposed tetrahedral intermediate for either reaction, inhibits the synthetase activity (Ki of 10 uM) but does not inhibit the amidase activity. Amidase activity is inhibited by iodoacetamide in vitro. In terms of biological role, catalyzes the formation of an amide bond between glutathione (GSH) and spermidine coupled with hydrolysis of ATP; also catalyzes the opposing reaction, i.e. the hydrolysis of glutathionylspermidine (Gsp) back to glutathione and spermidine. The amidase active site can also hydrolyze Gsp-disulfide (Gsp-S-S-Gsp) to Gsp-SG and Gsp S-thiolated proteins (GspSSPs) to GSH S-thiolated protein (GSSPs). Likely acts synergistically with glutaredoxin to regulate the redox environment of E.coli and defend against oxidative damage. In vitro, the amidase active site also catalyzes hydrolysis of amide and ester derivatives of glutathione (e.g. glutathione ethyl ester and glutathione amide) but lacks activity toward acetylspermidine (N1 and N8) and acetylspermine (N1). In Escherichia coli (strain K12), this protein is Bifunctional glutathionylspermidine synthetase/amidase (gss).